Consider the following 612-residue polypeptide: Replication protein E1 (612 aa).

The short motif at Lys-74 to Lys-76 is the Nuclear localization signal element. A phosphoserine; by host mark is found at Ser-80 and Ser-95. Positions Ile-94–Ile-103 match the Nuclear export signal motif. Residues His-148–Glu-315 are DNA-binding region. Residues Val-414 to Gly-564 enclose the SF3 helicase domain. Gly-440–Ser-447 contributes to the ATP binding site. Lys-521 participates in a covalent cross-link: Glycyl lysine isopeptide (Lys-Gly) (interchain with G-Cter in SUMO). Residues Asp-587–Ile-612 are disordered.

It belongs to the papillomaviridae E1 protein family. As to quaternary structure, can form hexamers. Interacts with E2 protein; this interaction increases E1 DNA binding specificity. Interacts with host DNA polymerase subunit POLA2. Interacts with host single stranded DNA-binding protein RPA1. Interacts with host TOP1; this interaction stimulates the enzymatic activity of TOP1. In terms of processing, phosphorylated. Post-translationally, sumoylated.

The protein resides in the host nucleus. It carries out the reaction Couples ATP hydrolysis with the unwinding of duplex DNA by translocating in the 3'-5' direction.. The catalysed reaction is ATP + H2O = ADP + phosphate + H(+). Functionally, ATP-dependent DNA 3'-5' helicase required for initiation of viral DNA replication. It forms a complex with the viral E2 protein. The E1-E2 complex binds to the replication origin which contains binding sites for both proteins. During the initial step, a dimer of E1 interacts with a dimer of protein E2 leading to a complex that binds the viral origin of replication with high specificity. Then, a second dimer of E1 displaces the E2 dimer in an ATP-dependent manner to form the E1 tetramer. Following this, two E1 monomers are added to each half of the site, which results in the formation of two E1 trimers on the viral ori. Subsequently, two hexamers will be created. The double hexamer acts as a bi-directional helicase machinery and unwinds the viral DNA and then recruits the host DNA polymerase to start replication. This is Replication protein E1 from Homo sapiens (Human).